A 212-amino-acid polypeptide reads, in one-letter code: Translation initiation factor IF-3 (212 aa).

The segment covering L190–S203 has biased composition (basic and acidic residues). Residues L190–Q212 are disordered.

This sequence belongs to the IF-3 family. In terms of assembly, monomer.

It is found in the cytoplasm. In terms of biological role, IF-3 binds to the 30S ribosomal subunit and shifts the equilibrium between 70S ribosomes and their 50S and 30S subunits in favor of the free subunits, thus enhancing the availability of 30S subunits on which protein synthesis initiation begins. The sequence is that of Translation initiation factor IF-3 from Mycoplasmopsis fermentans (Mycoplasma fermentans).